The primary structure comprises 89 residues: MNKSELIEAIAQEADISKAAAQKALDATTNAVTTALKQGDTVTLVGFGTFYVGERAERQGRNPKTGEPLTIAAAKTPKFRAGKALKDAL.

This sequence belongs to the bacterial histone-like protein family. As to quaternary structure, homodimer. The dimer interacts with the DNA mimic protein DMP12. It also interacts with the monomeric form of the DNA mimic protein DMP19 with 1:1 stoichiometry.

Activity is regulated by the DNA mimic protein DMP12. Activity is inhibited in the presence of the DNA mimic protein DMP19, which interacts with HU and prevents the binding of HU to DNA. Histone-like DNA-binding protein which is capable of wrapping DNA to stabilize it, and thus to prevent its denaturation under extreme environmental conditions. The sequence is that of DNA-binding protein HU from Neisseria meningitidis serogroup B (strain ATCC BAA-335 / MC58).